A 173-amino-acid polypeptide reads, in one-letter code: Crossover junction endodeoxyribonuclease RuvC (173 aa).

Active-site residues include Asp8, Glu67, and Asp139. Residues Asp8, Glu67, and Asp139 each contribute to the Mg(2+) site.

Belongs to the RuvC family. In terms of assembly, homodimer which binds Holliday junction (HJ) DNA. The HJ becomes 2-fold symmetrical on binding to RuvC with unstacked arms; it has a different conformation from HJ DNA in complex with RuvA. In the full resolvosome a probable DNA-RuvA(4)-RuvB(12)-RuvC(2) complex forms which resolves the HJ. Requires Mg(2+) as cofactor.

Its subcellular location is the cytoplasm. It carries out the reaction Endonucleolytic cleavage at a junction such as a reciprocal single-stranded crossover between two homologous DNA duplexes (Holliday junction).. Functionally, the RuvA-RuvB-RuvC complex processes Holliday junction (HJ) DNA during genetic recombination and DNA repair. Endonuclease that resolves HJ intermediates. Cleaves cruciform DNA by making single-stranded nicks across the HJ at symmetrical positions within the homologous arms, yielding a 5'-phosphate and a 3'-hydroxyl group; requires a central core of homology in the junction. The consensus cleavage sequence is 5'-(A/T)TT(C/G)-3'. Cleavage occurs on the 3'-side of the TT dinucleotide at the point of strand exchange. HJ branch migration catalyzed by RuvA-RuvB allows RuvC to scan DNA until it finds its consensus sequence, where it cleaves and resolves the cruciform DNA. In Vibrio parahaemolyticus serotype O3:K6 (strain RIMD 2210633), this protein is Crossover junction endodeoxyribonuclease RuvC.